The sequence spans 814 residues: E3 ubiquitin-protein ligase TRIM71 (814 aa).

The RING-type zinc finger occupies 12-76; sequence CPLCKEMCVS…SLQLRCPVCD (65 aa). The tract at residues 111–146 is disordered; sequence QQQSNGGRTASNRQRSASCSSSGLLRRAPPSQSEPR. Residues 120 to 138 show a composition bias toward low complexity; the sequence is ASNRQRSASCSSSGLLRRA. Residues 142–189 form a B box-type 1; atypical zinc finger; the sequence is QSEPRCSSCDDGNGASSHCLDCQENLCDNCLRAHQRVRLTKDHFIERF. 8 residues coordinate Zn(2+): C147, C150, C171, H175, C224, H227, C247, and H252. Residues 219–260 form a B box-type 2 zinc finger; sequence PERLYCQQHDEEVLHFYCDSCSVPICRECTMGRHAGHSFVYL. Positions 282 to 370 form a coiled coil; sequence RQAIQLSLEQ…INAVQQVLEE (89 aa). The Filamin repeat unit spans residues 425-526; the sequence is SSGAFAALTK…IENSPFKVNV (102 aa). NHL repeat units follow at residues 539–582, 586–629, 633–676, 680–723, 727–770, and 774–814; these read TLSF…FKPC, HHKF…FTFE, LLKF…FGPD, LNKY…IKPD, AHFL…FEPN, and LCKF…ILAF.

The protein belongs to the TRIM/RBCC family.

It localises to the cytoplasm. The protein localises to the P-body. It catalyses the reaction S-ubiquitinyl-[E2 ubiquitin-conjugating enzyme]-L-cysteine + [acceptor protein]-L-lysine = [E2 ubiquitin-conjugating enzyme]-L-cysteine + N(6)-ubiquitinyl-[acceptor protein]-L-lysine.. It participates in protein modification; protein ubiquitination. Functionally, E3 ubiquitin-protein ligase that cooperates with the microRNAs (miRNAs) machinery and promotes embryonic stem cells proliferation and maintenance. Binds to miRNAs and participates in post-transcriptional repression of transcripts. Required to maintain proliferation and prevent premature differentiation of neural progenitor cells during early neural development. The sequence is that of E3 ubiquitin-protein ligase TRIM71 (trim71) from Xenopus tropicalis (Western clawed frog).